Reading from the N-terminus, the 389-residue chain is Cytochrome b (389 aa).

Helical transmembrane passes span 32-52, 76-98, 113-133, and 179-199; these read FGSL…FLAM, WIVR…AHIG, LWSI…LGYV, and FFSL…AHFM. Residues histidine 82 and histidine 96 each contribute to the heme b site. 2 residues coordinate heme b: histidine 183 and histidine 197. Histidine 202 is an a ubiquinone binding site. A run of 4 helical transmembrane segments spans residues 225-245, 289-309, 321-341, and 348-368; these read FIFK…VIVF, LLGV…PLTD, AMKF…WLGS, and YLEI…VIVP.

This sequence belongs to the cytochrome b family. Fungal cytochrome b-c1 complex contains 10 subunits; 3 respiratory subunits, 2 core proteins and 5 low-molecular weight proteins. Cytochrome b-c1 complex is a homodimer. Heme b is required as a cofactor.

It localises to the mitochondrion inner membrane. Functionally, component of the ubiquinol-cytochrome c reductase complex (complex III or cytochrome b-c1 complex) that is part of the mitochondrial respiratory chain. The b-c1 complex mediates electron transfer from ubiquinol to cytochrome c. Contributes to the generation of a proton gradient across the mitochondrial membrane that is then used for ATP synthesis. The sequence is that of Cytochrome b (COB) from Strobilurus tenacellus.